The following is an 84-amino-acid chain: Small ribosomal subunit protein bS16 (84 aa).

The protein belongs to the bacterial ribosomal protein bS16 family.

This chain is Small ribosomal subunit protein bS16, found in Paraburkholderia phymatum (strain DSM 17167 / CIP 108236 / LMG 21445 / STM815) (Burkholderia phymatum).